We begin with the raw amino-acid sequence, 365 residues long: Gibberellin 20 oxidase 1-B (365 aa).

The region spanning 199 to 299 (GNDSIMRLNY…RKSLAFFLCP (101 aa)) is the Fe2OG dioxygenase domain. Fe cation contacts are provided by His-224, Asp-226, and His-280. The active site involves Arg-290.

It belongs to the iron/ascorbate-dependent oxidoreductase family. GA20OX subfamily. Requires Fe cation as cofactor. The cofactor is L-ascorbate. Not detected in nodes and the ear of the elongating stem.

The catalysed reaction is gibberellin A12 + 2 2-oxoglutarate + 3 O2 + H(+) = gibberellin A9 + 2 succinate + 3 CO2 + 2 H2O. It carries out the reaction gibberellin A53 + 2 2-oxoglutarate + 3 O2 + H(+) = gibberellin A20 + 2 succinate + 3 CO2 + 2 H2O. Functionally, key oxidase enzyme in the biosynthesis of gibberellin that catalyzes the conversion of GA12 and GA53 to GA9 and GA20 respectively, via a three-step oxidation at C-20 of the GA skeleton. This chain is Gibberellin 20 oxidase 1-B (GA20ox1B), found in Triticum aestivum (Wheat).